The sequence spans 349 residues: Xylitol-binding protein (349 aa).

Positions 1-22 (MNITSKIGAIAAAGAVGLGLTA) are cleaved as a signal peptide. Residue Cys-23 is the site of N-palmitoyl cysteine attachment. Cys-23 carries S-diacylglycerol cysteine lipidation. 6 residues coordinate xylitol: Tyr-42, Asn-121, Arg-173, Asn-224, Asp-249, and Gln-269.

The protein belongs to the bacterial solute-binding protein 2 family.

The protein resides in the cell membrane. Its function is as follows. Part of an ABC transporter complex likely involved in xylitol import. Binds xylitol. The polypeptide is Xylitol-binding protein (Mycolicibacterium smegmatis (strain ATCC 700084 / mc(2)155) (Mycobacterium smegmatis)).